Consider the following 168-residue polypeptide: Phosphopantetheine adenylyltransferase (168 aa).

Threonine 10 provides a ligand contact to substrate. ATP contacts are provided by residues 10–11 (TF) and histidine 18. Substrate contacts are provided by lysine 42, leucine 75, and arginine 89. Residues 90–92 (GVR), glutamate 100, and 125–131 (YTYVASS) contribute to the ATP site.

It belongs to the bacterial CoaD family. In terms of assembly, homohexamer. Mg(2+) serves as cofactor.

It is found in the cytoplasm. The catalysed reaction is (R)-4'-phosphopantetheine + ATP + H(+) = 3'-dephospho-CoA + diphosphate. It participates in cofactor biosynthesis; coenzyme A biosynthesis; CoA from (R)-pantothenate: step 4/5. Reversibly transfers an adenylyl group from ATP to 4'-phosphopantetheine, yielding dephospho-CoA (dPCoA) and pyrophosphate. The sequence is that of Phosphopantetheine adenylyltransferase from Prosthecochloris aestuarii (strain DSM 271 / SK 413).